A 367-amino-acid polypeptide reads, in one-letter code: Phosphoribosylaminoimidazole-succinocarboxamide synthase (367 aa).

It belongs to the SAICAR synthetase family.

It carries out the reaction 5-amino-1-(5-phospho-D-ribosyl)imidazole-4-carboxylate + L-aspartate + ATP = (2S)-2-[5-amino-1-(5-phospho-beta-D-ribosyl)imidazole-4-carboxamido]succinate + ADP + phosphate + 2 H(+). The protein operates within purine metabolism; IMP biosynthesis via de novo pathway; 5-amino-1-(5-phospho-D-ribosyl)imidazole-4-carboxamide from 5-amino-1-(5-phospho-D-ribosyl)imidazole-4-carboxylate: step 1/2. The protein is Phosphoribosylaminoimidazole-succinocarboxamide synthase of Aeromonas salmonicida (strain A449).